Here is a 201-residue protein sequence, read N- to C-terminus: Recombination protein RecR (201 aa).

The C4-type zinc finger occupies 57–72 (CADCRTFTEQEKCNIC). Residues 81–176 (GQICVVESPA…DASRIAHGVP (96 aa)) form the Toprim domain.

Belongs to the RecR family.

Its function is as follows. May play a role in DNA repair. It seems to be involved in an RecBC-independent recombinational process of DNA repair. It may act with RecF and RecO. The sequence is that of Recombination protein RecR from Cronobacter sakazakii (strain ATCC BAA-894) (Enterobacter sakazakii).